The following is a 115-amino-acid chain: Nucleoid-associated protein Pro_0020 (115 aa).

It belongs to the YbaB/EbfC family. Homodimer.

The protein resides in the cytoplasm. It is found in the nucleoid. Binds to DNA and alters its conformation. May be involved in regulation of gene expression, nucleoid organization and DNA protection. This is Nucleoid-associated protein Pro_0020 from Prochlorococcus marinus (strain SARG / CCMP1375 / SS120).